Here is a 450-residue protein sequence, read N- to C-terminus: LanC-like protein 2 (450 aa).

G2 is lipidated: N-myristoyl glycine. The segment at 2–14 is interaction with inositol phospholipids; it reads GETMSKRLKFHLG. Y198 bears the Phosphotyrosine mark.

The protein belongs to the LanC-like protein family. In terms of assembly, interacts with an array of inositol phospholipids such as phosphatidylinositol 3-phosphate (PI3P), phosphatidylinositol 4-phosphate (PI4P) and phosphatidylinositol 5-phosphate (PI5P). PIP-binding enhances membrane association. Myristoylated. Essential for membrane association.

The protein resides in the nucleus. It localises to the cytoplasm. The protein localises to the cell membrane. Its function is as follows. Necessary for abscisic acid (ABA) binding on the cell membrane and activation of the ABA signaling pathway in granulocytes. The chain is LanC-like protein 2 (Lancl2) from Mus musculus (Mouse).